Reading from the N-terminus, the 229-residue chain is Ribonuclease 3 (229 aa).

Positions 5-127 constitute an RNase III domain; the sequence is LARLERKLGY…LIGAIYLDAD (123 aa). Glutamate 40 contacts Mg(2+). The active site involves aspartate 44. Residues aspartate 113 and glutamate 116 each coordinate Mg(2+). Residue glutamate 116 is part of the active site. One can recognise a DRBM domain in the interval 154 to 224; it reads DPKTRLQEFL…AAAALIALGV (71 aa).

This sequence belongs to the ribonuclease III family. Homodimer. It depends on Mg(2+) as a cofactor.

The protein localises to the cytoplasm. The catalysed reaction is Endonucleolytic cleavage to 5'-phosphomonoester.. Functionally, digests double-stranded RNA. Involved in the processing of primary rRNA transcript to yield the immediate precursors to the large and small rRNAs (23S and 16S). Processes some mRNAs, and tRNAs when they are encoded in the rRNA operon. Processes pre-crRNA and tracrRNA of type II CRISPR loci if present in the organism. The protein is Ribonuclease 3 of Pseudomonas putida (strain W619).